Here is a 141-residue protein sequence, read N- to C-terminus: MALERTFSIVKPDAVERNLIGEIYNRIEKAGLRIIAAKMVHLTEEQASGFYAEHEGKEFFQPLKEFMTSGPIMVQVLEGENAIARYRELMGKTNPEEAAAGTLRADYALSMRHNSVHGSDSPESAAREIEFFFPESEICPR.

Positions 11, 59, 87, 93, 104, and 114 each coordinate ATP. The active-site Pros-phosphohistidine intermediate is H117.

This sequence belongs to the NDK family. As to quaternary structure, homotetramer. It depends on Mg(2+) as a cofactor.

It is found in the cytoplasm. The catalysed reaction is a 2'-deoxyribonucleoside 5'-diphosphate + ATP = a 2'-deoxyribonucleoside 5'-triphosphate + ADP. It carries out the reaction a ribonucleoside 5'-diphosphate + ATP = a ribonucleoside 5'-triphosphate + ADP. Major role in the synthesis of nucleoside triphosphates other than ATP. The ATP gamma phosphate is transferred to the NDP beta phosphate via a ping-pong mechanism, using a phosphorylated active-site intermediate. The polypeptide is Nucleoside diphosphate kinase (Vibrio parahaemolyticus serotype O3:K6 (strain RIMD 2210633)).